A 617-amino-acid chain; its full sequence is MAGALENARKEIKRISLEDHNENEYGQIYSVSGPVVVAENMVGCAMYELVKVGHHNLVGEVIRLDGDKATIQVYEETAGVTVGDPVLRTGKPLSVELGPGLMETIYDGIQRPLKAIKEQSQSIYIPRGVDAPALSREVKWAFKPGKLGVGDHISGGDIFGSIFENSLLEDHKILLPPRARGTITWIAPAGEYTVDETVLEVEFDGKKYSYSMFHTWPVRVPRPVTEKLSADYPLLTGQRVLDSLFPCVQGGTTCIPGAFGCGKTVISQSLSKYSNSDAIIYVGCGERGNEMAEVLMEFPELFTEVNGRKEPIMKRTTLVANTSNMPVAAREASIYTGITLAEYFRDQGKNVSMIADSSSRWAEALREISGRLGEMPADQGFPAYLGAKLASFYERAGKAVALGSPDRVGSVSIVAAVSPAGGDFSDPVTTSTLGITQVFWGLDKKLAQRKHFPSINTSVSYSKYTNVLNKYYDSNYPEFPVLRDRIKEILSNAEELEQVVQLVGKSALSDKDKIVLDVATLIKEDFLQQNGYSTYDAFCPIWKTYDMMKAFVSYFDEAQKSVSNGANWAVLSEATGDVKHAVSSSKFFEPSRGEREVHAEFEKLFASIQERFAESTD.

Gly-257–Thr-264 is an ATP binding site.

This sequence belongs to the ATPase alpha/beta chains family. As to quaternary structure, V-ATPase is a heteromultimeric enzyme composed of a peripheral catalytic V1 complex (components A to H) attached to an integral membrane V0 proton pore complex (components: a, c, c', c'', d, e, f and VOA1).

It localises to the vacuole membrane. The enzyme catalyses ATP + H2O + 4 H(+)(in) = ADP + phosphate + 5 H(+)(out). In terms of biological role, catalytic subunit of the V1 complex of vacuolar(H+)-ATPase (V-ATPase), a multisubunit enzyme composed of a peripheral complex (V1) that hydrolyzes ATP and a membrane integral complex (V0) that translocates protons. V-ATPase is responsible for acidifying and maintaining the pH of intracellular compartments. The chain is V-type proton ATPase catalytic subunit A (VMA1) from Eremothecium gossypii (strain ATCC 10895 / CBS 109.51 / FGSC 9923 / NRRL Y-1056) (Yeast).